Here is a 279-residue protein sequence, read N- to C-terminus: Pantothenate synthetase (279 aa).

Methionine 27–histidine 34 provides a ligand contact to ATP. The active-site Proton donor is the histidine 34. Glutamine 58 lines the (R)-pantoate pocket. Residue glutamine 58 participates in beta-alanine binding. Glycine 144–aspartate 147 lines the ATP pocket. Glutamine 150 is a binding site for (R)-pantoate. ATP-binding positions include valine 173 and methionine 181–arginine 184.

It belongs to the pantothenate synthetase family. As to quaternary structure, homodimer.

Its subcellular location is the cytoplasm. It carries out the reaction (R)-pantoate + beta-alanine + ATP = (R)-pantothenate + AMP + diphosphate + H(+). It functions in the pathway cofactor biosynthesis; (R)-pantothenate biosynthesis; (R)-pantothenate from (R)-pantoate and beta-alanine: step 1/1. Catalyzes the condensation of pantoate with beta-alanine in an ATP-dependent reaction via a pantoyl-adenylate intermediate. The sequence is that of Pantothenate synthetase from Geobacter sp. (strain M21).